The primary structure comprises 351 residues: Rhodopsin (351 aa).

Over 1–36 (MNGTEGPYFYVPMVNTTGVVRSPYEYPQYYLVNPAA) the chain is Extracellular. Asn-2 and Asn-15 each carry an N-linked (GlcNAc...) asparagine glycan. The helical transmembrane segment at 37 to 61 (FAVLGAYMFFLIIFGFPINFLTLYV) threads the bilayer. Topologically, residues 62–73 (TLEHKKLRTPLN) are cytoplasmic. A helical membrane pass occupies residues 74–96 (YILLNLAVADLFMVIGGFTTTMY). Topologically, residues 97-110 (SSMHGYFVLGRLGC) are extracellular. Cys-110 and Cys-187 form a disulfide bridge. The helical transmembrane segment at 111 to 133 (NLEGFSATLGGMISLWSLAVLAI) threads the bilayer. The 'Ionic lock' involved in activated form stabilization signature appears at 134–136 (ERW). Residues 134 to 152 (ERWVVVCKPTSNFRFGENH) lie on the Cytoplasmic side of the membrane. The helical transmembrane segment at 153–173 (AIMGVSLTWTMALACTVPPLV) threads the bilayer. Residues 174 to 202 (GWSRYIPEGMQCSCGIDYYTRAEGFNNES) lie on the Extracellular side of the membrane. A glycan (N-linked (GlcNAc...) asparagine) is linked at Asn-200. The chain crosses the membrane as a helical span at residues 203–224 (FVLYMFFCHFMVPLIIIFFCYG). At 225-252 (RLLCAVKEAAAAQQESETTQRAEREVTR) the chain is on the cytoplasmic side. A helical membrane pass occupies residues 253–274 (MVILMVIGYLVCWLPYASVAWF). Over 275 to 286 (IFTHQGSEFGPL) the chain is Extracellular. The helical transmembrane segment at 287–308 (FMTIPAFFAKSSSIYNPVIYIC) threads the bilayer. At Lys-296 the chain carries N6-(retinylidene)lysine. Topologically, residues 309–351 (MNKQFRNCMITTLFCGKNPFEGEEEGASSTKTEASSASSVSPA) are cytoplasmic. Cys-323 carries S-palmitoyl cysteine lipidation. Residues 330-351 (GEEEGASSTKTEASSASSVSPA) form a disordered region. Residues 335–351 (ASSTKTEASSASSVSPA) show a composition bias toward low complexity.

This sequence belongs to the G-protein coupled receptor 1 family. Opsin subfamily. Phosphorylated on some or all of the serine and threonine residues present in the C-terminal region. In terms of processing, contains one covalently linked retinal chromophore.

Its subcellular location is the membrane. The protein resides in the cell projection. The protein localises to the cilium. It localises to the photoreceptor outer segment. In terms of biological role, photoreceptor required for image-forming vision at low light intensity. While most salt water fish species use retinal as chromophore, most freshwater fish use 3-dehydroretinal, or a mixture of retinal and 3-dehydroretinal. Light-induced isomerization of 11-cis to all-trans retinal triggers a conformational change that activates signaling via G-proteins. Subsequent receptor phosphorylation mediates displacement of the bound G-protein alpha subunit by arrestin and terminates signaling. In Neoniphon sammara (Spotfin squirrelfish), this protein is Rhodopsin (rho).